The following is a 227-amino-acid chain: Large ribosomal subunit protein uL3 (227 aa).

It belongs to the universal ribosomal protein uL3 family. As to quaternary structure, part of the 50S ribosomal subunit. Forms a cluster with proteins L14 and L19.

Functionally, one of the primary rRNA binding proteins, it binds directly near the 3'-end of the 23S rRNA, where it nucleates assembly of the 50S subunit. The sequence is that of Large ribosomal subunit protein uL3 from Persephonella marina (strain DSM 14350 / EX-H1).